Here is a 490-residue protein sequence, read N- to C-terminus: Betaine aldehyde dehydrogenase (490 aa).

K(+) contacts are provided by Thr26, Ile27, and Asp93. 150 to 152 (GAW) provides a ligand contact to NAD(+). The active-site Charge relay system is the Lys162. 176 to 179 (KPSE) contributes to the NAD(+) binding site. Residue Val180 coordinates K(+). 230 to 233 (GVAS) contacts NAD(+). A K(+)-binding site is contributed by Leu246. Catalysis depends on Glu252, which acts as the Proton acceptor. The NAD(+) site is built by Gly254, Cys286, and Glu387. Catalysis depends on Cys286, which acts as the Nucleophile. Cys286 bears the Cysteine sulfenic acid (-SOH) mark. Lys457 and Gly460 together coordinate K(+). Catalysis depends on Glu464, which acts as the Charge relay system.

The protein belongs to the aldehyde dehydrogenase family. In terms of assembly, dimer of dimers. K(+) is required as a cofactor.

The enzyme catalyses betaine aldehyde + NAD(+) + H2O = glycine betaine + NADH + 2 H(+). It functions in the pathway amine and polyamine biosynthesis; betaine biosynthesis via choline pathway; betaine from betaine aldehyde: step 1/1. Functionally, involved in the biosynthesis of the osmoprotectant glycine betaine. Catalyzes the irreversible oxidation of betaine aldehyde to the corresponding acid. The chain is Betaine aldehyde dehydrogenase from Escherichia coli O9:H4 (strain HS).